The primary structure comprises 254 residues: tRNA (guanine-N(7)-)-methyltransferase (254 aa).

A compositionally biased stretch (basic and acidic residues) spans 1 to 11 (MSISDNSREEL). A disordered region spans residues 1–25 (MSISDNSREELGELPAGRPLQSEFN). Glutamate 83, glutamate 108, aspartate 135, and aspartate 158 together coordinate S-adenosyl-L-methionine. Aspartate 158 is a catalytic residue. Lysine 162 contacts substrate. Residues 164-169 (RHNKRR) are interaction with RNA. Substrate is bound by residues aspartate 194 and 232–235 (TKFE).

It belongs to the class I-like SAM-binding methyltransferase superfamily. TrmB family.

It carries out the reaction guanosine(46) in tRNA + S-adenosyl-L-methionine = N(7)-methylguanosine(46) in tRNA + S-adenosyl-L-homocysteine. It functions in the pathway tRNA modification; N(7)-methylguanine-tRNA biosynthesis. Its function is as follows. Catalyzes the formation of N(7)-methylguanine at position 46 (m7G46) in tRNA. This Corynebacterium efficiens (strain DSM 44549 / YS-314 / AJ 12310 / JCM 11189 / NBRC 100395) protein is tRNA (guanine-N(7)-)-methyltransferase.